The following is a 201-amino-acid chain: NADH-quinone oxidoreductase subunit B 1 (201 aa).

Residues C80, C81, C145, and C175 each coordinate [4Fe-4S] cluster.

Belongs to the complex I 20 kDa subunit family. NDH-1 is composed of 14 different subunits. Subunits NuoB, C, D, E, F, and G constitute the peripheral sector of the complex. [4Fe-4S] cluster is required as a cofactor.

The protein resides in the cell inner membrane. It carries out the reaction a quinone + NADH + 5 H(+)(in) = a quinol + NAD(+) + 4 H(+)(out). NDH-1 shuttles electrons from NADH, via FMN and iron-sulfur (Fe-S) centers, to quinones in the respiratory chain. The immediate electron acceptor for the enzyme in this species is believed to be ubiquinone. Couples the redox reaction to proton translocation (for every two electrons transferred, four hydrogen ions are translocated across the cytoplasmic membrane), and thus conserves the redox energy in a proton gradient. The sequence is that of NADH-quinone oxidoreductase subunit B 1 from Rhodopseudomonas palustris (strain BisB18).